The following is a 635-amino-acid chain: 1-deoxy-D-xylulose-5-phosphate synthase (635 aa).

Thiamine diphosphate is bound by residues H72 and 113–115; that span reads GHA. D144 lines the Mg(2+) pocket. Thiamine diphosphate is bound by residues 145 to 146, N174, Y286, and E369; that span reads GA. N174 is a binding site for Mg(2+).

This sequence belongs to the transketolase family. DXPS subfamily. In terms of assembly, homodimer. Requires Mg(2+) as cofactor. Thiamine diphosphate is required as a cofactor.

It catalyses the reaction D-glyceraldehyde 3-phosphate + pyruvate + H(+) = 1-deoxy-D-xylulose 5-phosphate + CO2. It participates in metabolic intermediate biosynthesis; 1-deoxy-D-xylulose 5-phosphate biosynthesis; 1-deoxy-D-xylulose 5-phosphate from D-glyceraldehyde 3-phosphate and pyruvate: step 1/1. Functionally, catalyzes the acyloin condensation reaction between C atoms 2 and 3 of pyruvate and glyceraldehyde 3-phosphate to yield 1-deoxy-D-xylulose-5-phosphate (DXP). The protein is 1-deoxy-D-xylulose-5-phosphate synthase of Acaryochloris marina (strain MBIC 11017).